The sequence spans 339 residues: Biotin synthase (339 aa).

In terms of domain architecture, Radical SAM core spans 51–278; it reads SEVELATLLS…KARVRLSAGR (228 aa). [4Fe-4S] cluster-binding residues include Cys-66, Cys-70, and Cys-73. [2Fe-2S] cluster is bound by residues Cys-110, Cys-141, Cys-201, and Arg-273.

Belongs to the radical SAM superfamily. Biotin synthase family. Homodimer. The cofactor is [4Fe-4S] cluster. It depends on [2Fe-2S] cluster as a cofactor.

It catalyses the reaction (4R,5S)-dethiobiotin + (sulfur carrier)-SH + 2 reduced [2Fe-2S]-[ferredoxin] + 2 S-adenosyl-L-methionine = (sulfur carrier)-H + biotin + 2 5'-deoxyadenosine + 2 L-methionine + 2 oxidized [2Fe-2S]-[ferredoxin]. It participates in cofactor biosynthesis; biotin biosynthesis; biotin from 7,8-diaminononanoate: step 2/2. Catalyzes the conversion of dethiobiotin (DTB) to biotin by the insertion of a sulfur atom into dethiobiotin via a radical-based mechanism. The polypeptide is Biotin synthase (Herminiimonas arsenicoxydans).